The primary structure comprises 34 residues: MSDINATRLPAWLTDCPCVGDDVNRLLTRGESLC.

Positions 1–10 are excised as a propeptide; it reads MSDINATRLP. Positions 11–17 form a cross-link, cyclopeptide (Ala-Pro); that stretch reads AWLTDCP. Positions 18–34 are excised as a propeptide; sequence CVGDDVNRLLTRGESLC.

Belongs to the MSDIN fungal toxin family. Processed by the macrocyclase-peptidase enzyme POPB to yield a toxic cyclic heptapeptide. POPB first removes 10 residues from the N-terminus. Conformational trapping of the remaining peptide forces the enzyme to release this intermediate rather than proceed to macrocyclization. The enzyme rebinds the remaining peptide in a different conformation and catalyzes macrocyclization of the N-terminal 7 residues. Expressed in basidiocarps.

In terms of biological role, probable toxin that belongs to the MSDIN-like toxin family responsible for a large number of food poisoning cases and deaths. The chain is MSDIN-like toxin proprotein 7 from Amanita exitialis (Guangzhou destroying angel).